A 378-amino-acid chain; its full sequence is DNA replication and repair protein RecF (378 aa).

30–37 (GRNGQGKT) provides a ligand contact to ATP.

This sequence belongs to the RecF family.

The protein resides in the cytoplasm. Functionally, the RecF protein is involved in DNA metabolism; it is required for DNA replication and normal SOS inducibility. RecF binds preferentially to single-stranded, linear DNA. It also seems to bind ATP. This is DNA replication and repair protein RecF from Frankia alni (strain DSM 45986 / CECT 9034 / ACN14a).